A 1270-amino-acid chain; its full sequence is DNA-directed RNA polymerase subunit beta (1270 aa).

This sequence belongs to the RNA polymerase beta chain family. The RNAP catalytic core consists of 2 alpha, 1 beta, 1 beta' and 1 omega subunit. When a sigma factor is associated with the core the holoenzyme is formed, which can initiate transcription.

It carries out the reaction RNA(n) + a ribonucleoside 5'-triphosphate = RNA(n+1) + diphosphate. In terms of biological role, DNA-dependent RNA polymerase catalyzes the transcription of DNA into RNA using the four ribonucleoside triphosphates as substrates. The protein is DNA-directed RNA polymerase subunit beta of Bacteroides fragilis (strain ATCC 25285 / DSM 2151 / CCUG 4856 / JCM 11019 / LMG 10263 / NCTC 9343 / Onslow / VPI 2553 / EN-2).